The primary structure comprises 444 residues: NADH-quinone oxidoreductase subunit F (444 aa).

61–70 provides a ligand contact to NAD(+); that stretch reads GRGGAGFSTG. Residue 176–223 coordinates FMN; it reads GAGRYICGEETALINSLEGRRANPRSKPPFPAVFGLWGKPTCVNNVET. [4Fe-4S] cluster is bound by residues C353, C356, C359, and C400.

It belongs to the complex I 51 kDa subunit family. As to quaternary structure, composed of 13 different subunits. Subunits NuoCD, E, F, and G constitute the peripheral sector of the complex. Requires FMN as cofactor. [4Fe-4S] cluster is required as a cofactor.

The enzyme catalyses a quinone + NADH + 5 H(+)(in) = a quinol + NAD(+) + 4 H(+)(out). Functionally, NDH-1 shuttles electrons from NADH, via FMN and iron-sulfur (Fe-S) centers, to quinones in the respiratory chain. Couples the redox reaction to proton translocation (for every two electrons transferred, four hydrogen ions are translocated across the cytoplasmic membrane), and thus conserves the redox energy in a proton gradient. The chain is NADH-quinone oxidoreductase subunit F (nuoF) from Buchnera aphidicola subsp. Acyrthosiphon pisum (strain APS) (Acyrthosiphon pisum symbiotic bacterium).